A 585-amino-acid chain; its full sequence is Lipoprotein LpqB (585 aa).

Positions 1–17 (MGRKLLGLLMLAVLLAG) are cleaved as a signal peptide. The N-palmitoyl cysteine moiety is linked to residue C18. C18 carries the S-diacylglycerol cysteine lipid modification. 2 disordered regions span residues 24-46 (SSAP…KPTP) and 560-585 (PSAD…VLPG).

This sequence belongs to the LpqB lipoprotein family.

It is found in the cell membrane. This is Lipoprotein LpqB from Mycobacterium paratuberculosis.